The chain runs to 1377 residues: DNA-directed RNA polymerase subunit beta' (1377 aa).

4 residues coordinate Zn(2+): cysteine 60, cysteine 62, cysteine 75, and cysteine 78. Residues aspartate 449, aspartate 451, and aspartate 453 each contribute to the Mg(2+) site. Cysteine 777, cysteine 851, cysteine 858, and cysteine 861 together coordinate Zn(2+).

This sequence belongs to the RNA polymerase beta' chain family. In terms of assembly, the RNAP catalytic core consists of 2 alpha, 1 beta, 1 beta' and 1 omega subunit. When a sigma factor is associated with the core the holoenzyme is formed, which can initiate transcription. Mg(2+) serves as cofactor. It depends on Zn(2+) as a cofactor.

It catalyses the reaction RNA(n) + a ribonucleoside 5'-triphosphate = RNA(n+1) + diphosphate. Its function is as follows. DNA-dependent RNA polymerase catalyzes the transcription of DNA into RNA using the four ribonucleoside triphosphates as substrates. In Borreliella afzelii (strain PKo) (Borrelia afzelii), this protein is DNA-directed RNA polymerase subunit beta'.